The primary structure comprises 722 residues: Glycine--tRNA ligase beta subunit (722 aa).

It belongs to the class-II aminoacyl-tRNA synthetase family. In terms of assembly, tetramer of two alpha and two beta subunits.

It localises to the cytoplasm. The catalysed reaction is tRNA(Gly) + glycine + ATP = glycyl-tRNA(Gly) + AMP + diphosphate. The protein is Glycine--tRNA ligase beta subunit of Xylella fastidiosa (strain M12).